The chain runs to 144 residues: UPF0102 protein BURPS1106A_3900 (144 aa).

A disordered region spans residues 1–28 (MCHAREASPGTGEPEAAPRDNFPRAAGS).

The protein belongs to the UPF0102 family.

This chain is UPF0102 protein BURPS1106A_3900, found in Burkholderia pseudomallei (strain 1106a).